The sequence spans 431 residues: Glucose-1-phosphate adenylyltransferase (431 aa).

Residues tyrosine 109, glycine 175, 190–191 (EK), and serine 208 each bind alpha-D-glucose 1-phosphate.

Belongs to the bacterial/plant glucose-1-phosphate adenylyltransferase family. In terms of assembly, homotetramer.

The catalysed reaction is alpha-D-glucose 1-phosphate + ATP + H(+) = ADP-alpha-D-glucose + diphosphate. It functions in the pathway glycan biosynthesis; glycogen biosynthesis. Involved in the biosynthesis of ADP-glucose, a building block required for the elongation reactions to produce glycogen. Catalyzes the reaction between ATP and alpha-D-glucose 1-phosphate (G1P) to produce pyrophosphate and ADP-Glc. The sequence is that of Glucose-1-phosphate adenylyltransferase from Alteromonas mediterranea (strain DSM 17117 / CIP 110805 / LMG 28347 / Deep ecotype).